Consider the following 490-residue polypeptide: Probable glycine dehydrogenase (decarboxylating) subunit 2 (490 aa).

N6-(pyridoxal phosphate)lysine is present on K273.

The protein belongs to the GcvP family. C-terminal subunit subfamily. In terms of assembly, the glycine cleavage system is composed of four proteins: P, T, L and H. In this organism, the P 'protein' is a heterodimer of two subunits. Pyridoxal 5'-phosphate is required as a cofactor.

The enzyme catalyses N(6)-[(R)-lipoyl]-L-lysyl-[glycine-cleavage complex H protein] + glycine + H(+) = N(6)-[(R)-S(8)-aminomethyldihydrolipoyl]-L-lysyl-[glycine-cleavage complex H protein] + CO2. In terms of biological role, the glycine cleavage system catalyzes the degradation of glycine. The P protein binds the alpha-amino group of glycine through its pyridoxal phosphate cofactor; CO(2) is released and the remaining methylamine moiety is then transferred to the lipoamide cofactor of the H protein. This is Probable glycine dehydrogenase (decarboxylating) subunit 2 from Staphylococcus aureus (strain bovine RF122 / ET3-1).